Here is a 349-residue protein sequence, read N- to C-terminus: Phenylalanine--tRNA ligase alpha subunit (349 aa).

Mg(2+) is bound at residue E258.

This sequence belongs to the class-II aminoacyl-tRNA synthetase family. Phe-tRNA synthetase alpha subunit type 1 subfamily. In terms of assembly, tetramer of two alpha and two beta subunits. Mg(2+) is required as a cofactor.

The protein localises to the cytoplasm. It catalyses the reaction tRNA(Phe) + L-phenylalanine + ATP = L-phenylalanyl-tRNA(Phe) + AMP + diphosphate + H(+). The chain is Phenylalanine--tRNA ligase alpha subunit from Rickettsia conorii (strain ATCC VR-613 / Malish 7).